Reading from the N-terminus, the 509-residue chain is Maturase K (509 aa).

This sequence belongs to the intron maturase 2 family. MatK subfamily.

Its subcellular location is the plastid. The protein resides in the chloroplast. Functionally, usually encoded in the trnK tRNA gene intron. Probably assists in splicing its own and other chloroplast group II introns. The polypeptide is Maturase K (Solanum lycopersicum (Tomato)).